The chain runs to 105 residues: MKVIFSVAVLVLASSVWTSLAVDFILPMNFHMTGELLQKTKALCIKNIQLCWILSYFKVSEPICGSNQVTYEGECHLCSGILYEDRTVIKVHDGPCEHSSDESEH.

Positions M1 to A21 are cleaved as a signal peptide. 3 cysteine pairs are disulfide-bonded: C44/C78, C51/C75, and C64/C96. The Kazal-like domain occupies C44–H98.

As to expression, expressed in epydiymis, in the cauda, corpus and caput.

It is found in the secreted. Probable serine protease inhibitor. The protein is Serine protease inhibitor Kazal-type 8 (Spink8) of Mus musculus (Mouse).